A 293-amino-acid polypeptide reads, in one-letter code: 4-hydroxy-tetrahydrodipicolinate synthase (293 aa).

Residue threonine 50 coordinates pyruvate. Residue tyrosine 138 is the Proton donor/acceptor of the active site. Lysine 166 serves as the catalytic Schiff-base intermediate with substrate. Valine 206 contributes to the pyruvate binding site.

It belongs to the DapA family. Homotetramer; dimer of dimers.

Its subcellular location is the cytoplasm. The enzyme catalyses L-aspartate 4-semialdehyde + pyruvate = (2S,4S)-4-hydroxy-2,3,4,5-tetrahydrodipicolinate + H2O + H(+). Its pathway is amino-acid biosynthesis; L-lysine biosynthesis via DAP pathway; (S)-tetrahydrodipicolinate from L-aspartate: step 3/4. Catalyzes the condensation of (S)-aspartate-beta-semialdehyde [(S)-ASA] and pyruvate to 4-hydroxy-tetrahydrodipicolinate (HTPA). The chain is 4-hydroxy-tetrahydrodipicolinate synthase from Cutibacterium acnes (strain DSM 16379 / KPA171202) (Propionibacterium acnes).